The following is a 529-amino-acid chain: Zinc metalloproteinase MspA (529 aa).

The N-terminal stretch at 1–24 is a signal peptide; it reads MHHNYYLSPLAVALALGMVSPAKA. A propeptide spanning residues 25–204 is cleaved from the precursor; it reads ADPILLQNAS…PFVQWNDIKT (180 aa). Position 365 (His365) interacts with Zn(2+). Glu366 is a catalytic residue. The Zn(2+) site is built by His369 and Glu389. His451 (proton donor) is an active-site residue.

This sequence belongs to the peptidase M4 family. Requires Zn(2+) as cofactor.

This is Zinc metalloproteinase MspA (mspA) from Legionella longbeachae.